Here is a 205-residue protein sequence, read N- to C-terminus: Lymphotoxin-alpha (205 aa).

Residues Met1 to Gly34 form the signal peptide. O-linked (GalNAc...) threonine; partial glycosylation is present at Thr41. The region spanning Pro63–Leu205 is the THD domain. A glycan (N-linked (GlcNAc...) asparagine) is linked at Asn96.

This sequence belongs to the tumor necrosis factor family. Homotrimer, and heterotrimer of either two LTB and one LTA subunits or (less prevalent) two LTA and one LTB subunits. Interacts with TNFRSF14.

It is found in the secreted. Its subcellular location is the membrane. In terms of biological role, cytokine that in its homotrimeric form binds to TNFRSF1A/TNFR1, TNFRSF1B/TNFBR and TNFRSF14/HVEM. In its heterotrimeric form with LTB binds to TNFRSF3/LTBR. Lymphotoxin is produced by lymphocytes and is cytotoxic for a wide range of tumor cells in vitro and in vivo. This chain is Lymphotoxin-alpha (LTA), found in Homo sapiens (Human).